The following is a 143-amino-acid chain: Putative pre-16S rRNA nuclease (143 aa).

Belongs to the YqgF nuclease family.

Its subcellular location is the cytoplasm. Its function is as follows. Could be a nuclease involved in processing of the 5'-end of pre-16S rRNA. The chain is Putative pre-16S rRNA nuclease from Mesomycoplasma hyopneumoniae (strain 232) (Mycoplasma hyopneumoniae).